The chain runs to 286 residues: Alpha-ketoglutarate-dependent dioxygenase alkB homolog 3 (286 aa).

A disordered region spans residues Gln-21–Lys-45. A compositionally biased stretch (polar residues) spans Ala-22 to Lys-31. Substrate is bound by residues Trp-115 and Tyr-141–Tyr-143. A Fe2OG dioxygenase domain is found at Thr-172 to Tyr-278. Leu-177 carries the (4R)-5-hydroxyleucine; alternate modification. At Leu-177 the chain carries (4R)-5-oxoleucine; alternate. Asn-179 to Tyr-181 contributes to the 2-oxoglutarate binding site. Fe cation contacts are provided by His-191 and Asp-193. Residue Asp-194 participates in substrate binding. His-257 contributes to the Fe cation binding site. 2-oxoglutarate contacts are provided by residues Arg-269–Arg-275 and Arg-275.

It belongs to the alkB family. As to quaternary structure, interacts with the ASCC complex composed of ASCC1, ASCC2 and ASCC3. Interacts directly with ASCC3, and is thereby recruited to the ASCC complex. Interacts with OTUD4; the interaction is direct. Interacts with USP7 and USP9X. Requires Fe(2+) as cofactor. Post-translationally, ubiquitinated; undergoes 'Lys-48'-linked polyubiquitination. OTUD4 promotes USP7 and USP9X-dependent deubiquitination of 'Lys-48'-polyubiquitinated ALKBH3 promoting the repair of alkylated DNA lesions. In terms of tissue distribution, ubiquitous. Detected in heart, pancreas, skeletal muscle, thymus, testis, ovary, spleen, prostate, small intestine, peripheral blood leukocytes, urinary bladder and colon.

The protein localises to the nucleus. Its subcellular location is the cytoplasm. It catalyses the reaction an N(1)-methyladenosine in mRNA + 2-oxoglutarate + O2 = an adenosine in mRNA + formaldehyde + succinate + CO2. It carries out the reaction a methylated nucleobase within DNA + 2-oxoglutarate + O2 = a nucleobase within DNA + formaldehyde + succinate + CO2. The enzyme catalyses an N(1)-methyl-2'-deoxyadenosine in single-stranded DNA + 2-oxoglutarate + O2 = a 2'-deoxyadenosine in single-stranded DNA + formaldehyde + succinate + CO2 + H(+). The catalysed reaction is an N(3)-methyl-2'-deoxycytidine in single-stranded DNA + 2-oxoglutarate + O2 = a 2'-deoxycytidine in single-stranded DNA + formaldehyde + succinate + CO2 + H(+). It catalyses the reaction a 3,N(4)-etheno-2'-deoxycytidine in single-stranded DNA + 2-oxoglutarate + O2 + H2O = a 2'-deoxycytidine in single-stranded DNA + glyoxal + succinate + CO2. With respect to regulation, activated by ascorbate. Functionally, dioxygenase that mediates demethylation of DNA and RNA containing 1-methyladenosine (m1A). Repairs alkylated DNA containing 1-methyladenosine (m1A) and 3-methylcytosine (m3C) by oxidative demethylation. Has a strong preference for single-stranded DNA. Able to process alkylated m3C within double-stranded regions via its interaction with ASCC3, which promotes DNA unwinding to generate single-stranded substrate needed for ALKBH3. Can repair exocyclic 3,N4-ethenocytosine adducs in single-stranded DNA. Also acts on RNA. Demethylates N(1)-methyladenosine (m1A) RNA, an epigenetic internal modification of messenger RNAs (mRNAs) highly enriched within 5'-untranslated regions (UTRs) and in the vicinity of start codons. Requires molecular oxygen, alpha-ketoglutarate and iron. The sequence is that of Alpha-ketoglutarate-dependent dioxygenase alkB homolog 3 from Homo sapiens (Human).